The sequence spans 90 residues: Large ribosomal subunit protein eL31 (90 aa).

This sequence belongs to the eukaryotic ribosomal protein eL31 family.

The protein is Large ribosomal subunit protein eL31 of Thermococcus gammatolerans (strain DSM 15229 / JCM 11827 / EJ3).